Reading from the N-terminus, the 345-residue chain is Phosphate acyltransferase (345 aa).

This sequence belongs to the PlsX family. As to quaternary structure, homodimer. Probably interacts with PlsY.

It is found in the cytoplasm. It carries out the reaction a fatty acyl-[ACP] + phosphate = an acyl phosphate + holo-[ACP]. It functions in the pathway lipid metabolism; phospholipid metabolism. Its function is as follows. Catalyzes the reversible formation of acyl-phosphate (acyl-PO(4)) from acyl-[acyl-carrier-protein] (acyl-ACP). This enzyme utilizes acyl-ACP as fatty acyl donor, but not acyl-CoA. The sequence is that of Phosphate acyltransferase from Wolbachia sp. subsp. Brugia malayi (strain TRS).